We begin with the raw amino-acid sequence, 331 residues long: Ferredoxin--NADP reductase 2 (331 aa).

FAD-binding residues include Glu37, Gln45, Tyr50, Val90, Phe124, Asp286, and Thr327.

This sequence belongs to the ferredoxin--NADP reductase type 2 family. In terms of assembly, homodimer. It depends on FAD as a cofactor.

It carries out the reaction 2 reduced [2Fe-2S]-[ferredoxin] + NADP(+) + H(+) = 2 oxidized [2Fe-2S]-[ferredoxin] + NADPH. The chain is Ferredoxin--NADP reductase 2 from Listeria welshimeri serovar 6b (strain ATCC 35897 / DSM 20650 / CCUG 15529 / CIP 8149 / NCTC 11857 / SLCC 5334 / V8).